Reading from the N-terminus, the 466-residue chain is Probable sensor protein PcoS (466 aa).

The Cytoplasmic portion of the chain corresponds to methionine 1–arginine 10. Residues leucine 11–isoleucine 31 form a helical membrane-spanning segment. The Periplasmic segment spans residues serine 32–threonine 171. A helical transmembrane segment spans residues tryptophan 172–threonine 192. One can recognise an HAMP domain in the interval arginine 193–arginine 246. Residues arginine 193–aspartate 466 are Cytoplasmic-facing. In terms of domain architecture, Histidine kinase spans aspartate 254 to aspartate 466. Position 257 is a phosphohistidine; by autocatalysis (histidine 257).

It is found in the cell inner membrane. It catalyses the reaction ATP + protein L-histidine = ADP + protein N-phospho-L-histidine.. Probable member of a two-component regulatory system PcoS/PcoR. May activate PcoR by phosphorylation. The polypeptide is Probable sensor protein PcoS (pcoS) (Escherichia coli).